Reading from the N-terminus, the 274-residue chain is Protein bax (274 aa).

Positions 32–64 (TTASQKSHLTKASNKQVSSKQEYSRNSAKSSSL) are enriched in polar residues. The tract at residues 32–74 (TTASQKSHLTKASNKQVSSKQEYSRNSAKSSSLPDLRKYPSGT) is disordered. 247–254 (GYSTKGKS) contributes to the ATP binding site.

The chain is Protein bax (bax) from Escherichia coli (strain K12).